The following is a 369-amino-acid chain: uncharacterized protein (369 aa).

Residues methionine 1–alanine 19 form the signal peptide.

This is an uncharacterized protein from Haemophilus influenzae (strain ATCC 51907 / DSM 11121 / KW20 / Rd).